The primary structure comprises 98 residues: Glutaredoxin 1 (98 aa).

The region spanning 1–98 is the Glutaredoxin domain; the sequence is MNKAILHAII…KLLEGQPKKD (98 aa). A disulfide bridge links C17 with C20.

This sequence belongs to the glutaredoxin family. In terms of assembly, monomer.

Its subcellular location is the cytoplasm. Its function is as follows. Has a glutathione-disulfide oxidoreductase activity in the presence of NADPH and glutathione reductase. Reduces low molecular weight disulfides and proteins. This is Glutaredoxin 1 (grxC1) from Rickettsia bellii (strain RML369-C).